The sequence spans 56 residues: Ribosome modulation factor (56 aa).

Belongs to the ribosome modulation factor family.

It is found in the cytoplasm. Functionally, during stationary phase, converts 70S ribosomes to an inactive dimeric form (100S ribosomes). This is Ribosome modulation factor from Proteus mirabilis (strain HI4320).